The following is a 318-amino-acid chain: Thymidylate synthase (318 aa).

DUMP-binding positions include Arg25 and Arg180–Arg181. Cys200 functions as the Nucleophile in the catalytic mechanism. DUMP is bound by residues Arg220–Asp223, Asn231, and His261–Tyr263. Asp223 lines the (6R)-5,10-methylene-5,6,7,8-tetrahydrofolate pocket. Ala317 contributes to the (6R)-5,10-methylene-5,6,7,8-tetrahydrofolate binding site.

The protein belongs to the thymidylate synthase family. Bacterial-type ThyA subfamily. As to quaternary structure, homodimer.

The protein resides in the cytoplasm. It carries out the reaction dUMP + (6R)-5,10-methylene-5,6,7,8-tetrahydrofolate = 7,8-dihydrofolate + dTMP. Its pathway is pyrimidine metabolism; dTTP biosynthesis. Catalyzes the reductive methylation of 2'-deoxyuridine-5'-monophosphate (dUMP) to 2'-deoxythymidine-5'-monophosphate (dTMP) while utilizing 5,10-methylenetetrahydrofolate (mTHF) as the methyl donor and reductant in the reaction, yielding dihydrofolate (DHF) as a by-product. This enzymatic reaction provides an intracellular de novo source of dTMP, an essential precursor for DNA biosynthesis. In Ligilactobacillus salivarius (strain UCC118) (Lactobacillus salivarius), this protein is Thymidylate synthase.